We begin with the raw amino-acid sequence, 396 residues long: L-lactate dehydrogenase (396 aa).

Residues 1–380 (MIISAASDYR…TQDSLVQGLG (380 aa)) form the FMN hydroxy acid dehydrogenase domain. Tyr24 contributes to the substrate binding site. FMN is bound by residues Ser106 and Gln127. Tyr129 is a substrate binding site. Residue Thr155 coordinates FMN. Residue Arg164 coordinates substrate. An FMN-binding site is contributed by Lys251. His275 (proton acceptor) is an active-site residue. Arg278 lines the substrate pocket. 306–330 (DSGIRNGLDVVRMIALGADTVLLGR) is an FMN binding site.

This sequence belongs to the FMN-dependent alpha-hydroxy acid dehydrogenase family. The cofactor is FMN.

Its subcellular location is the cell inner membrane. The enzyme catalyses (S)-lactate + A = pyruvate + AH2. In terms of biological role, catalyzes the conversion of L-lactate to pyruvate. Is coupled to the respiratory chain. The protein is L-lactate dehydrogenase of Shigella flexneri serotype 5b (strain 8401).